Consider the following 158-residue polypeptide: Pyruvoyl-dependent arginine decarboxylase (158 aa).

Residue Ser44 is modified to Pyruvic acid (Ser).

Belongs to the PdaD family. It depends on pyruvate as a cofactor.

The enzyme catalyses L-arginine + H(+) = agmatine + CO2. The polypeptide is Pyruvoyl-dependent arginine decarboxylase (Pyrococcus furiosus (strain ATCC 43587 / DSM 3638 / JCM 8422 / Vc1)).